The following is a 775-amino-acid chain: Beta-galactosidase 7 (775 aa).

An N-terminal signal peptide occupies residues 1-17 (MRGGMAITAALVVVAAA). E185 functions as the Proton donor in the catalytic mechanism. E256 acts as the Nucleophile in catalysis. 5 N-linked (GlcNAc...) asparagine glycosylation sites follow: N257, N266, N277, N358, and N602. Positions 689 to 775 (RGKVPKVRIW…KSLLVVADCR (87 aa)) constitute an SUEL-type lectin domain.

It belongs to the glycosyl hydrolase 35 family.

The protein localises to the secreted. It is found in the extracellular space. The protein resides in the apoplast. The catalysed reaction is Hydrolysis of terminal non-reducing beta-D-galactose residues in beta-D-galactosides.. The sequence is that of Beta-galactosidase 7 from Oryza sativa subsp. japonica (Rice).